We begin with the raw amino-acid sequence, 206 residues long: Large ribosomal subunit protein uL4 (206 aa).

It belongs to the universal ribosomal protein uL4 family. As to quaternary structure, part of the 50S ribosomal subunit.

In terms of biological role, one of the primary rRNA binding proteins, this protein initially binds near the 5'-end of the 23S rRNA. It is important during the early stages of 50S assembly. It makes multiple contacts with different domains of the 23S rRNA in the assembled 50S subunit and ribosome. Forms part of the polypeptide exit tunnel. The protein is Large ribosomal subunit protein uL4 of Xanthobacter autotrophicus (strain ATCC BAA-1158 / Py2).